The following is a 395-amino-acid chain: Elongation factor Tu (395 aa).

In terms of domain architecture, tr-type G spans 10 to 204; that stretch reads KPHCNIGTIG…TVDSYIPDPQ (195 aa). Residues 19–26 form a G1 region; that stretch reads GHVDHGKT. 19–26 serves as a coordination point for GTP; the sequence is GHVDHGKT. Thr-26 is a Mg(2+) binding site. A G2 region spans residues 61 to 65; the sequence is GITIS. Positions 82-85 are G3; it reads DCPG. GTP-binding positions include 82 to 86 and 137 to 140; these read DCPGH and NKCD. A G4 region spans residues 137–140; that stretch reads NKCD. The segment at 173–175 is G5; it reads SAL.

Belongs to the TRAFAC class translation factor GTPase superfamily. Classic translation factor GTPase family. EF-Tu/EF-1A subfamily. Monomer.

It is found in the cytoplasm. The catalysed reaction is GTP + H2O = GDP + phosphate + H(+). GTP hydrolase that promotes the GTP-dependent binding of aminoacyl-tRNA to the A-site of ribosomes during protein biosynthesis. The sequence is that of Elongation factor Tu from Agathobacter rectalis (strain ATCC 33656 / DSM 3377 / JCM 17463 / KCTC 5835 / VPI 0990) (Eubacterium rectale).